A 104-amino-acid chain; its full sequence is Defensin-2 (104 aa).

Residues 1-19 form the signal peptide; sequence MKFFVLFAILIAIVHASCA. 3 cysteine pairs are disulfide-bonded: C64–C95, C81–C100, and C85–C102.

It belongs to the invertebrate defensin family. Type 1 subfamily. In terms of tissue distribution, low expression in head and thorax.

It is found in the secreted. Its function is as follows. Antibacterial peptide mostly active against Gram-positive bacteria. This Apis mellifera (Honeybee) protein is Defensin-2.